Reading from the N-terminus, the 141-residue chain is Hemoglobin subunit alpha-1 (141 aa).

In terms of domain architecture, Globin spans 1–141 (VLTEDDKNHI…VAKTLVAHYR (141 aa)). His-58 provides a ligand contact to O2. Position 87 (His-87) interacts with heme b.

This sequence belongs to the globin family. In terms of assembly, heterotetramer of two alpha chains and two beta chains. Red blood cells.

In terms of biological role, involved in oxygen transport from the lung to the various peripheral tissues. The polypeptide is Hemoglobin subunit alpha-1 (Iguana iguana (Common iguana)).